A 455-amino-acid chain; its full sequence is Argininosuccinate lyase (455 aa).

This sequence belongs to the lyase 1 family. Argininosuccinate lyase subfamily.

Its subcellular location is the cytoplasm. It catalyses the reaction 2-(N(omega)-L-arginino)succinate = fumarate + L-arginine. The protein operates within amino-acid biosynthesis; L-arginine biosynthesis; L-arginine from L-ornithine and carbamoyl phosphate: step 3/3. The protein is Argininosuccinate lyase of Shewanella baltica (strain OS195).